The chain runs to 111 residues: BET1-like protein (111 aa).

Residues 1-86 are Cytoplasmic-facing; it reads MADWTRAQSS…VARSGRDTRK (86 aa). Phosphoserine occurs at positions 9 and 37. Positions 15 to 77 constitute a t-SNARE coiled-coil homology domain; that stretch reads EIVDRENKRM…TGSVKRFSTV (63 aa). The chain crosses the membrane as a helical; Anchor for type IV membrane protein span at residues 87–107; it reads LLCGMAVVLIVAFFILSYLFS. Topologically, residues 108-111 are vesicular; that stretch reads RTRT.

Component of a SNARE complex consisting of STX5, YKT6, GOSR1 and BET1L. Interacts with STX5. In terms of tissue distribution, widely expressed. Highest levels in heart, liver, skeletal muscle and kidney.

It localises to the golgi apparatus membrane. The protein resides in the golgi apparatus. It is found in the trans-Golgi network membrane. Vesicle SNARE required for targeting and fusion of retrograde transport vesicles with the Golgi complex. Required for the integrity of the Golgi complex. The protein is BET1-like protein of Rattus norvegicus (Rat).